The sequence spans 604 residues: MAVARTVFGLGTLSYLHQAPLFLKTSQSLFPRPSLSLKPMKHDFVCVKATTKSSTSDDLESGRPSILFSPSIWGDYFLSVSVDDSEFDDIAREIESVMKPYVRDRLISSHNSNKDKIRLIHLLISLGISYYFESEIEMILNKAFEELDMIIAEEDDLETISIMFEVFRLYQHKMSCDSFVRFKGEDGRLKESLVGDVRGMLQLYQAAHLGTPSDQYIMEEAKSFTRNHLESLVESTTIPPHFSSHIRDALYIDRYHNMEILVARKYISFYEQEEGHDLTLLKFGKLSFNYCRLHYIQELKTLTKWWKDQDIPSNLPCVRDRIVETYFPTLGLYFEPRFSLGRIIIAKMTIIVVALNDVCDSYATYPEAKSLIDSLQRWDIEAIDELPNYSRIVLRLILETIGEIEREMKPRGRSASVQHTIDETKSLGRAYLALSKWASEGYMPTFDEYMEVGEVTGGMDDFALYSFIAMEDCDEKPLYEWFDSKPKILQALSVLYRINNDIVTYEREMSKGEVVNGVNSYMNQHGVTKEEAVEELRKMARDNYKIVMEELLTITDVPRPVLVRCLNLARLFDVFCKHGNDEFTYPHGNLKDLITSIFIHPIPV.

Asparagine 356, aspartate 360, asparagine 500, threonine 504, and glutamate 508 together coordinate Mg(2+). A DDXXD motif; degenerate motif is present at residues 356 to 360 (NDVCD).

The protein belongs to the terpene synthase family. Tpsa subfamily. It depends on Mg(2+) as a cofactor. Mn(2+) serves as cofactor.

The protein localises to the cytoplasm. Its pathway is secondary metabolite biosynthesis; terpenoid biosynthesis. Involved in terpene biosynthesis in roots. Possesses sesquiterpene (C15) synthase activity and diterpene (C20) synthase activity in vitro. This Arabidopsis thaliana (Mouse-ear cress) protein is Terpenoid synthase 30.